A 214-amino-acid chain; its full sequence is Uracil phosphoribosyltransferase (214 aa).

5-phospho-alpha-D-ribose 1-diphosphate is bound by residues arginine 81, arginine 106, and 133-141 (DPMLATGNS). Uracil is bound by residues isoleucine 196 and 201–203 (GDA). Aspartate 202 contributes to the 5-phospho-alpha-D-ribose 1-diphosphate binding site.

Belongs to the UPRTase family. Mg(2+) is required as a cofactor.

It catalyses the reaction UMP + diphosphate = 5-phospho-alpha-D-ribose 1-diphosphate + uracil. Its pathway is pyrimidine metabolism; UMP biosynthesis via salvage pathway; UMP from uracil: step 1/1. Its activity is regulated as follows. Allosterically activated by GTP. Catalyzes the conversion of uracil and 5-phospho-alpha-D-ribose 1-diphosphate (PRPP) to UMP and diphosphate. The chain is Uracil phosphoribosyltransferase from Legionella pneumophila subsp. pneumophila (strain Philadelphia 1 / ATCC 33152 / DSM 7513).